The following is a 437-amino-acid chain: MPIIRKILARQILDSRGNPTVEVDVYTENSFGRAAVPSGASTGVHEAVELRDGDSAVYLGKGVLKAVDHVNTVINDRLKGMFVTDQEEIDMAMLALDGTPNKSRLGANALLGVSMACAKAGAEYSGLPLYRYIGGTMANTLPVPMMNVLNGGAHADNTVDFQEFMIMPVGFSSYSDALRSGAEIFHALKSLLKSKGLSTAVGDEGGFAPNLKSNEEAIELVIEAVGKAGYKIGSSTANGGLGDAQVMIALDPASSEFYDAAKQKYVFKKSSKQELSSLEMAEYWEKWASDYPIISIEDGMAEDDWDGWKILTDKIGSRVQLVGDDLFVTNTSRLALGIERGVGNSILVKVNQIGTLTETLQAIDLARRNGYTAVISHRSGETEDSTIAQIAVATNAGQIKTGSLSRSDRMAKYNELLRIEEELGLQAKYPALSAFRV.

A (2R)-2-phosphoglycerate-binding site is contributed by glutamine 162. The Proton donor role is filled by glutamate 204. Positions 251, 297, and 324 each coordinate Mg(2+). Residues lysine 349, arginine 378, serine 379, and lysine 400 each contribute to the (2R)-2-phosphoglycerate site. Lysine 349 acts as the Proton acceptor in catalysis.

Belongs to the enolase family. The cofactor is Mg(2+).

It is found in the cytoplasm. The protein resides in the secreted. Its subcellular location is the cell surface. The catalysed reaction is (2R)-2-phosphoglycerate = phosphoenolpyruvate + H2O. Its pathway is carbohydrate degradation; glycolysis; pyruvate from D-glyceraldehyde 3-phosphate: step 4/5. Catalyzes the reversible conversion of 2-phosphoglycerate (2-PG) into phosphoenolpyruvate (PEP). It is essential for the degradation of carbohydrates via glycolysis. The sequence is that of Enolase from Chlorobium phaeobacteroides (strain DSM 266 / SMG 266 / 2430).